The chain runs to 238 residues: IkB-like protein (238 aa).

ANK repeat units lie at residues 48-77, 86-115, 123-152, and 157-187; these read GSSV…PGEI, DGNS…KNGT, NGMT…DPTQ, and RGFT…PLYM. A Nuclear localization signal motif is present at residues 80–86; that stretch reads PHRRDKD. Residues 202–213 carry the Nuclear localization signal motif; that stretch reads KKKPKIIITGCK. A PxIxITxC motif; Interaction with host PPP3CA motif is present at residues 205–212; it reads PKIIITGC. Positions 227 to 230 match the FLCV motif motif; that stretch reads FLCV.

This sequence belongs to the asfivirus A238L family. Interacts with host PPIA. Interacts with host PPP3CA/Calcineurin. Interacts with host RELA/p65; interaction of the 32 kDa form with host RELA results in the formation of a stable complex with NF-kappa-B. Interacts with host PPP3R1. Interacts with host EP300; this interaction inhibits the association of host EP300 with host RELA, JUN and NFATC2. The protein exists in a 28 kDa and a 32 kDa form, probably due to post-translational modifications which are neither phosphorylation, nor sumoylation.

The protein localises to the host nucleus. The protein resides in the host cytoplasm. Its function is as follows. I-kappa-B- (IkB)-like protein that inhibits the binding of NF-kappa-B to DNA, thereby down-regulating pro-inflammatory cytokine production. Forms a heterodimer with the NF-kappa-B subunit RELA/p65 and prevents the activation of the NF-kappa-B transcription factor. Also inhibits the host calcineurin phosphatase activity, which is required for the induction of nuclear factor of activated T cells(NFAT)-dependent immune response genes. Inhibits calcineurin function, which is required for the induction of nuclear factor of activated T cells (NFAT)-dependent immune response genes. Prevents the binding of substrates to calcineurin without affecting the phosphatase activity. Does not contain the serine residues that are phosphorylated by host IkB kinase and thus is not degraded following stimulation of the NFkB pathway. This is IkB-like protein (A238L) from African swine fever virus (strain Badajoz 1971 Vero-adapted) (Ba71V).